Here is a 425-residue protein sequence, read N- to C-terminus: Synaptotagmin-4 (425 aa).

The Vesicular portion of the chain corresponds to 1–16; that stretch reads MAPITTSRVEFDEIPT. The chain crosses the membrane as a helical span at residues 17 to 37; the sequence is VVGIFSAFGLVFTVSLFAWIC. Residues 38 to 425 are Cytoplasmic-facing; it reads CQRRSAKSNK…IAKWHMLCDG (388 aa). Residues 127 to 147 are disordered; that stretch reads TETEKEANSPESLKSSTSLTS. S135 is modified (phosphoserine; by MAPK8). The span at 137–146 shows a compositional bias: low complexity; sequence ESLKSSTSLT. C2 domains are found at residues 153–274 and 287–420; these read KLGT…MLMT and GRGE…AKWH. Residues D246, S249, and D252 each contribute to the Ca(2+) site.

This sequence belongs to the synaptotagmin family. In terms of assembly, interacts with KIF1A; the interaction increases in presence of calcium and decreases when SYT4 is phosphorylated at Ser-135. It depends on Ca(2+) as a cofactor. Post-translationally, phosphorylation at Ser-135 by MAPK8/JNK1 reduces interaction with KIF1A and neuronal dense core vesicles mobility. As to expression, expressed in many regions of the nervous system but is undetectable in extra neural tissues.

It is found in the cytoplasmic vesicle. The protein resides in the secretory vesicle. The protein localises to the neuronal dense core vesicle membrane. Its function is as follows. Synaptotagmin family member which does not bind Ca(2+). Plays a role in dendrite formation by melanocytes. In terms of biological role, synaptotagmin family member which does not bind Ca(2+). Involved in neuronal dense core vesicles (DCVs) mobility through its interaction with KIF1A. Upon increased neuronal activity, phosphorylation by MAPK8/JNK1 destabilizes the interaction with KIF1A and captures DCVs to synapses. Plays a role in dendrite formation by melanocytes. This Mus musculus (Mouse) protein is Synaptotagmin-4 (Syt4).